Reading from the N-terminus, the 518-residue chain is Ankyrin repeat and SOCS box protein 3 (518 aa).

ANK repeat units follow at residues 9 to 38 (DTCS…SVDV), 42 to 71 (RGWM…SENY), 78 to 107 (EGFC…DPNA), 111 to 140 (EETT…NVNG), 145 to 174 (CGWN…NKEC), 178 to 207 (FGIT…NVNC), 211 to 240 (DKAT…DPDL), 246 to 275 (SWQL…RACD), 279 to 308 (NKVS…SPDA), 315 to 346 (GFSS…QINE), and 348 to 373 (HLAY…SLGP). The region spanning 441–504 (MLSARASNAW…HNYLLYEDVL (64 aa)) is the SOCS box domain.

It belongs to the ankyrin SOCS box (ASB) family. As to quaternary structure, interacts with ELOB and TNFRSF1B.

The protein localises to the cytoplasm. Its pathway is protein modification; protein ubiquitination. Probable substrate-recognition component of a SCF-like ECS (Elongin-Cullin-SOCS-box protein) E3 ubiquitin-protein ligase complex which mediates the ubiquitination and subsequent proteasomal degradation of target proteins. Recognizes TNFRSF1B. Plays a role in the down-regulation of antiviral innate immunity by targeting MAVS for ubiquitin-proteasomal degradation. Also destabilizes TRAF6 by enhancing its 'Lys-48'-linked polyubiquitination. This is Ankyrin repeat and SOCS box protein 3 (ASB3) from Homo sapiens (Human).